The following is a 699-amino-acid chain: DNA ligase (699 aa).

Positions 1 to 29 (MSDADVDAESNPYLRDPPTEFEPAESLSR) are disordered. NAD(+) is bound by residues 60 to 64 (DAAYD), 108 to 109 (SI), and E137. The active-site N6-AMP-lysine intermediate is the K139. Positions 160, 196, 311, and 335 each coordinate NAD(+). Zn(2+) is bound by residues C425, C428, C441, and C447. Residues 613–666 (SGGDELDGLTFVVTGTLAASRSDVTELVESHGGNVTGSVSGNTDYLVVGENPGR) form the BRCT domain.

It belongs to the NAD-dependent DNA ligase family. LigA subfamily. Requires Mg(2+) as cofactor. It depends on Mn(2+) as a cofactor.

The enzyme catalyses NAD(+) + (deoxyribonucleotide)n-3'-hydroxyl + 5'-phospho-(deoxyribonucleotide)m = (deoxyribonucleotide)n+m + AMP + beta-nicotinamide D-nucleotide.. With respect to regulation, displays maximal in vitro activity at high salt levels. DNA ligase that catalyzes the formation of phosphodiester linkages between 5'-phosphoryl and 3'-hydroxyl groups in double-stranded DNA using NAD as a coenzyme and as the energy source for the reaction. It is essential for DNA replication and repair of damaged DNA. The polypeptide is DNA ligase (Haloferax volcanii (strain ATCC 29605 / DSM 3757 / JCM 8879 / NBRC 14742 / NCIMB 2012 / VKM B-1768 / DS2) (Halobacterium volcanii)).